The chain runs to 117 residues: Large ribosomal subunit protein bL20 (117 aa).

This sequence belongs to the bacterial ribosomal protein bL20 family.

Its function is as follows. Binds directly to 23S ribosomal RNA and is necessary for the in vitro assembly process of the 50S ribosomal subunit. It is not involved in the protein synthesizing functions of that subunit. The chain is Large ribosomal subunit protein bL20 from Limosilactobacillus fermentum (strain NBRC 3956 / LMG 18251) (Lactobacillus fermentum).